Here is a 196-residue protein sequence, read N- to C-terminus: GTP cyclohydrolase-2 (196 aa).

49–53 (RVHSE) is a binding site for GTP. Residues Cys54, Cys65, and Cys67 each coordinate Zn(2+). GTP-binding positions include Gln70, 92–94 (EGR), and Thr114. Asp126 acts as the Proton acceptor in catalysis. Arg128 functions as the Nucleophile in the catalytic mechanism. GTP is bound by residues Thr149 and Lys154.

The protein belongs to the GTP cyclohydrolase II family. Homodimer. The cofactor is Zn(2+).

The catalysed reaction is GTP + 4 H2O = 2,5-diamino-6-hydroxy-4-(5-phosphoribosylamino)-pyrimidine + formate + 2 phosphate + 3 H(+). The protein operates within cofactor biosynthesis; riboflavin biosynthesis; 5-amino-6-(D-ribitylamino)uracil from GTP: step 1/4. In terms of biological role, catalyzes the conversion of GTP to 2,5-diamino-6-ribosylamino-4(3H)-pyrimidinone 5'-phosphate (DARP), formate and pyrophosphate. This chain is GTP cyclohydrolase-2, found in Salmonella choleraesuis (strain SC-B67).